Consider the following 37-residue polypeptide: Defensin-A (37 aa).

3 cysteine pairs are disulfide-bonded: Cys-4-Cys-25, Cys-10-Cys-33, and Cys-14-Cys-35.

The protein resides in the secreted. Its function is as follows. Has antibacterial activity against M.luteus and E.coli. The chain is Defensin-A from Mytilus edulis (Blue mussel).